We begin with the raw amino-acid sequence, 413 residues long: Gamma-glutamyl phosphate reductase (413 aa).

This sequence belongs to the gamma-glutamyl phosphate reductase family.

Its subcellular location is the cytoplasm. It catalyses the reaction L-glutamate 5-semialdehyde + phosphate + NADP(+) = L-glutamyl 5-phosphate + NADPH + H(+). Its pathway is amino-acid biosynthesis; L-proline biosynthesis; L-glutamate 5-semialdehyde from L-glutamate: step 2/2. Functionally, catalyzes the NADPH-dependent reduction of L-glutamate 5-phosphate into L-glutamate 5-semialdehyde and phosphate. The product spontaneously undergoes cyclization to form 1-pyrroline-5-carboxylate. This chain is Gamma-glutamyl phosphate reductase, found in Lactococcus lactis subsp. lactis (strain IL1403) (Streptococcus lactis).